We begin with the raw amino-acid sequence, 453 residues long: Crh-like protein CRH11 (453 aa).

Residues 1–21 (MKFTTLATIASTLLFAANANA) form the signal peptide. The cysteines at positions 24 and 32 are disulfide-linked. Residues 28-227 (KSSDCSPVPA…WAGGITDYSQ (200 aa)) enclose the GH16 domain. E119 serves as the catalytic Nucleophile. The active-site Proton donor is the E123. E123, W204, and T215 together coordinate chitin. Disordered regions lie at residues 281–343 (LESG…SEKS), 362–397 (KTTV…PASA), and 410–430 (GDAA…TENN). 3 stretches are compositionally biased toward low complexity: residues 286–343 (SVDS…SEKS), 363–397 (TTVT…PASA), and 412–425 (AAPS…PSVS). N290 is a glycosylation site (N-linked (GlcNAc...) asparagine). N430 is lipidated: GPI-anchor amidated asparagine. Positions 431 to 453 (GAVSVAKTTSLFGFVALIGFLFV) are cleaved as a propeptide — removed in mature form.

It belongs to the glycosyl hydrolase 16 family. CRH1 subfamily. Post-translationally, the GPI-anchor is attached to the protein in the endoplasmic reticulum and serves to target the protein to the cell surface. There, the glucosamine-inositol phospholipid moiety is cleaved off and the GPI-modified mannoprotein is covalently attached via its lipidless GPI glycan remnant to the 1,6-beta-glucan of the outer cell wall layer.

It is found in the secreted. The protein localises to the cell wall. The protein resides in the membrane. It carries out the reaction Random endo-hydrolysis of N-acetyl-beta-D-glucosaminide (1-&gt;4)-beta-linkages in chitin and chitodextrins.. Functionally, dual chitinase/transglycosylase that plays a role in cell wall architecture. Chitinase and transglycosylase activities are coupled. Required for the polysaccharide cross-linking at the septa and the cell wall. More specifically, transfers chitin to 1,6-beta-glucan in the cell wall. Plays an important role in fungal pathogenesis via its functions in cell wall assembly and regeneration, filamentation, and adherence to host cells. In Candida albicans (strain SC5314 / ATCC MYA-2876) (Yeast), this protein is Crh-like protein CRH11 (CRH11).